The sequence spans 382 residues: Galactokinase (382 aa).

Substrate is bound at residue E34–D37. Residue G124–S130 participates in ATP binding. Positions 130 and 162 each coordinate Mg(2+). The Proton acceptor role is filled by D174. Y223 provides a ligand contact to substrate.

Belongs to the GHMP kinase family. GalK subfamily.

It is found in the cytoplasm. The catalysed reaction is alpha-D-galactose + ATP = alpha-D-galactose 1-phosphate + ADP + H(+). It participates in carbohydrate metabolism; galactose metabolism. Functionally, catalyzes the transfer of the gamma-phosphate of ATP to D-galactose to form alpha-D-galactose-1-phosphate (Gal-1-P). The sequence is that of Galactokinase from Escherichia coli O127:H6 (strain E2348/69 / EPEC).